The following is a 467-amino-acid chain: Cytochrome P450 76A1 (467 aa).

Cys410 provides a ligand contact to heme.

Belongs to the cytochrome P450 family. It depends on heme as a cofactor.

The protein is Cytochrome P450 76A1 (CYP76A1) of Solanum melongena (Eggplant).